The primary structure comprises 156 residues: Large ribosomal subunit protein uL22 (156 aa).

It belongs to the universal ribosomal protein uL22 family. Part of the 50S ribosomal subunit.

Functionally, this protein binds specifically to 23S rRNA. It makes multiple contacts with different domains of the 23S rRNA in the assembled 50S subunit and ribosome. In terms of biological role, the globular domain of the protein is located near the polypeptide exit tunnel on the outside of the subunit, while an extended beta-hairpin is found that lines the wall of the exit tunnel in the center of the 70S ribosome. The polypeptide is Large ribosomal subunit protein uL22 (Sulfurisphaera tokodaii (strain DSM 16993 / JCM 10545 / NBRC 100140 / 7) (Sulfolobus tokodaii)).